Here is a 217-residue protein sequence, read N- to C-terminus: ATP phosphoribosyltransferase (217 aa).

It belongs to the ATP phosphoribosyltransferase family. Short subfamily. As to quaternary structure, heteromultimer composed of HisG and HisZ subunits.

It is found in the cytoplasm. It carries out the reaction 1-(5-phospho-beta-D-ribosyl)-ATP + diphosphate = 5-phospho-alpha-D-ribose 1-diphosphate + ATP. It participates in amino-acid biosynthesis; L-histidine biosynthesis; L-histidine from 5-phospho-alpha-D-ribose 1-diphosphate: step 1/9. Its function is as follows. Catalyzes the condensation of ATP and 5-phosphoribose 1-diphosphate to form N'-(5'-phosphoribosyl)-ATP (PR-ATP). Has a crucial role in the pathway because the rate of histidine biosynthesis seems to be controlled primarily by regulation of HisG enzymatic activity. This Prochlorococcus marinus (strain MIT 9313) protein is ATP phosphoribosyltransferase.